A 335-amino-acid polypeptide reads, in one-letter code: 4-hydroxy-3-methylbut-2-enyl diphosphate reductase 2 (335 aa).

Cysteine 37 serves as a coordination point for [4Fe-4S] cluster. 2 residues coordinate (2E)-4-hydroxy-3-methylbut-2-enyl diphosphate: histidine 66 and histidine 99. 2 residues coordinate dimethylallyl diphosphate: histidine 66 and histidine 99. Isopentenyl diphosphate-binding residues include histidine 66 and histidine 99. Cysteine 121 is a binding site for [4Fe-4S] cluster. Histidine 149 contacts (2E)-4-hydroxy-3-methylbut-2-enyl diphosphate. Histidine 149 is a dimethylallyl diphosphate binding site. Histidine 149 contributes to the isopentenyl diphosphate binding site. Glutamate 151 serves as the catalytic Proton donor. Threonine 189 contacts (2E)-4-hydroxy-3-methylbut-2-enyl diphosphate. Cysteine 219 contributes to the [4Fe-4S] cluster binding site. (2E)-4-hydroxy-3-methylbut-2-enyl diphosphate is bound by residues serine 247, serine 248, asparagine 249, and serine 292. Dimethylallyl diphosphate contacts are provided by serine 247, serine 248, asparagine 249, and serine 292. Serine 247, serine 248, asparagine 249, and serine 292 together coordinate isopentenyl diphosphate.

It belongs to the IspH family. Requires [4Fe-4S] cluster as cofactor.

It carries out the reaction isopentenyl diphosphate + 2 oxidized [2Fe-2S]-[ferredoxin] + H2O = (2E)-4-hydroxy-3-methylbut-2-enyl diphosphate + 2 reduced [2Fe-2S]-[ferredoxin] + 2 H(+). The catalysed reaction is dimethylallyl diphosphate + 2 oxidized [2Fe-2S]-[ferredoxin] + H2O = (2E)-4-hydroxy-3-methylbut-2-enyl diphosphate + 2 reduced [2Fe-2S]-[ferredoxin] + 2 H(+). Its pathway is isoprenoid biosynthesis; dimethylallyl diphosphate biosynthesis; dimethylallyl diphosphate from (2E)-4-hydroxy-3-methylbutenyl diphosphate: step 1/1. It participates in isoprenoid biosynthesis; isopentenyl diphosphate biosynthesis via DXP pathway; isopentenyl diphosphate from 1-deoxy-D-xylulose 5-phosphate: step 6/6. Its function is as follows. Catalyzes the conversion of 1-hydroxy-2-methyl-2-(E)-butenyl 4-diphosphate (HMBPP) into a mixture of isopentenyl diphosphate (IPP) and dimethylallyl diphosphate (DMAPP). Acts in the terminal step of the DOXP/MEP pathway for isoprenoid precursor biosynthesis. Has a higher activity compared with LytB2. Is essential for M.tuberculosis growth in vitro. The polypeptide is 4-hydroxy-3-methylbut-2-enyl diphosphate reductase 2 (Mycobacterium tuberculosis (strain ATCC 25618 / H37Rv)).